The chain runs to 392 residues: Zinc transporter zipt-7.1 (392 aa).

N-linked (GlcNAc...) asparagine glycosylation occurs at Asn-63. The next 2 membrane-spanning stretches (helical) occupy residues 82-102 (VFSLSAVIGISLAPCTLLFFI) and 114-134 (ILLAFGAGGLLGDALLHIIPH). Residues 139-162 (HSHGAHDHDHAHSHDHAHNDHSHD) are disordered. Residues 142-162 (GAHDHDHAHSHDHAHNDHSHD) are compositionally biased toward basic and acidic residues. The helical transmembrane segment at 170 to 190 (GIYVIAGILVFMMVEQLVRII) threads the bilayer. A glycan (N-linked (GlcNAc...) asparagine) is linked at Asn-248. Helical transmembrane passes span 255-275 (IGASFSAGSTLGWVTTLTVLL), 304-324 (VTALGAITGCIFSLLISNPVL), and 331-351 (GAIMPFTAGGFIYIATVSVIP). Asn-361 is a glycosylation site (N-linked (GlcNAc...) asparagine). A helical transmembrane segment spans residues 371-391 (SLVHLIAICMGVGMMYIVSLV).

This sequence belongs to the ZIP transporter (TC 2.A.5) family. KE4/Catsup subfamily.

It localises to the membrane. In terms of biological role, zinc transporter which regulates intracellular zinc levels. Required for spermatogenesis in both hermaphrodites and males where it resides in an inactive form in immature sperm, spermatids, but is likely activated in response to reduced spe-4 and spe-6 function. Upon activation, mediates the release of zinc from internal stores in spermatids into the cytoplasm. The resulting increase in cytoplasmic zinc levels promotes spermatid activation and subsequent differentiation into mature motile sperm that are capable of fertilization. In Caenorhabditis briggsae, this protein is Zinc transporter zipt-7.1.